The chain runs to 419 residues: MVFSAVLTAFHTGTSNTTFVVYENTYMNITLPPPFQHPDLSPLLRYSFETMAPTGLSSLTVNSTAVPTTPAAFKSLNLPLQITLSAIMIFILFVSFLGNLVVCLMVYQKAAMRSAINILLASLAFADMLLAVLNMPFALVTILTTRWIFGKFFCRVSAMFFWLFVIEGVAILLIISIDRFLIIVQRQDKLNPYRAKVLIAVSWATSFCVAFPLAVGNPDLQIPSRAPQCVFGYTTNPGYQAYVILISLISFFIPFLVILYSFMGILNTLRHNALRIHSYPEGICLSQASKLGLMSLQRPFQMSIDMGFKTRAFTTILILFAVFIVCWAPFTTYSLVATFSKHFYYQHNFFEISTWLLWLCYLKSALNPLIYYWRIKKFHDACLDMMPKSFKFLPQLPGHTKRRIRPSAVYVCGEHRTVV.

Over 1–81 (MVFSAVLTAF…AFKSLNLPLQ (81 aa)) the chain is Extracellular. N-linked (GlcNAc...) asparagine glycans are attached at residues N16, N28, and N62. Residues 82 to 104 (ITLSAIMIFILFVSFLGNLVVCL) form a helical membrane-spanning segment. At 105–115 (MVYQKAAMRSA) the chain is on the cytoplasmic side. The chain crosses the membrane as a helical span at residues 116-138 (INILLASLAFADMLLAVLNMPFA). The Extracellular segment spans residues 139 to 157 (LVTILTTRWIFGKFFCRVS). A helical membrane pass occupies residues 158-177 (AMFFWLFVIEGVAILLIISI). Residues 178–196 (DRFLIIVQRQDKLNPYRAK) are Cytoplasmic-facing. A helical transmembrane segment spans residues 197–216 (VLIAVSWATSFCVAFPLAVG). The Extracellular segment spans residues 217–240 (NPDLQIPSRAPQCVFGYTTNPGYQ). Residues 241-263 (AYVILISLISFFIPFLVILYSFM) form a helical membrane-spanning segment. Over 264-315 (GILNTLRHNALRIHSYPEGICLSQASKLGLMSLQRPFQMSIDMGFKTRAFTT) the chain is Cytoplasmic. The chain crosses the membrane as a helical span at residues 316–338 (ILILFAVFIVCWAPFTTYSLVAT). The Extracellular segment spans residues 339–352 (FSKHFYYQHNFFEI). The helical transmembrane segment at 353-375 (STWLLWLCYLKSALNPLIYYWRI) threads the bilayer. Topologically, residues 376 to 419 (KKFHDACLDMMPKSFKFLPQLPGHTKRRIRPSAVYVCGEHRTVV) are cytoplasmic.

The protein belongs to the G-protein coupled receptor 1 family. As to expression, expressed in brain; detected in the frontal cortex, with lower levels in the thalamus, caudate, hypothalamus and midbrain.

It is found in the cell membrane. In terms of biological role, orphan receptor. May play a role in brain function. This chain is Probable G-protein coupled receptor 63 (GPR63), found in Homo sapiens (Human).